Reading from the N-terminus, the 176-residue chain is MAEAPSRMQQNYDWQCEDAINTHIQLCLYASYEYMSMAVYFDRDDVAQENFKRFFLTKSHNCQTSAEMFMHLQNKRGGCSSLQGIARPERDSWHGGFQAMECAFHMEMLINQSLLNMHEVAKEKGDPHLCHFLEQNCLDQQVDILKEMSGYLTNLRQMGAVEHNLAEYLFDKLSLS.

A Ferritin-like diiron domain is found at 10 to 159 (QNYDWQCEDA…GYLTNLRQMG (150 aa)). Cys-27, Glu-107, and Gln-141 together coordinate Fe cation.

Belongs to the ferritin family. As to expression, expressed in the testes and spermatogonia.

This chain is Ferritin heavy polypeptide-like 17E, found in Mus musculus (Mouse).